We begin with the raw amino-acid sequence, 61 residues long: Small ribosomal subunit protein uS14 (61 aa).

The Zn(2+) site is built by cysteine 24, cysteine 27, cysteine 40, and cysteine 43.

This sequence belongs to the universal ribosomal protein uS14 family. Zinc-binding uS14 subfamily. As to quaternary structure, part of the 30S ribosomal subunit. Contacts proteins S3 and S10. It depends on Zn(2+) as a cofactor.

In terms of biological role, binds 16S rRNA, required for the assembly of 30S particles and may also be responsible for determining the conformation of the 16S rRNA at the A site. This chain is Small ribosomal subunit protein uS14, found in Deinococcus geothermalis (strain DSM 11300 / CIP 105573 / AG-3a).